Here is a 328-residue protein sequence, read N- to C-terminus: tRNA N6-adenosine threonylcarbamoyltransferase (328 aa).

Fe cation contacts are provided by histidine 111 and histidine 115. Residues 133–137 (LVSGG), aspartate 166, glycine 179, aspartate 183, and asparagine 270 each bind substrate. Aspartate 296 is a Fe cation binding site.

The protein belongs to the KAE1 / TsaD family. Fe(2+) serves as cofactor.

The protein localises to the cytoplasm. The catalysed reaction is L-threonylcarbamoyladenylate + adenosine(37) in tRNA = N(6)-L-threonylcarbamoyladenosine(37) in tRNA + AMP + H(+). Required for the formation of a threonylcarbamoyl group on adenosine at position 37 (t(6)A37) in tRNAs that read codons beginning with adenine. Is involved in the transfer of the threonylcarbamoyl moiety of threonylcarbamoyl-AMP (TC-AMP) to the N6 group of A37, together with TsaE and TsaB. TsaD likely plays a direct catalytic role in this reaction. The polypeptide is tRNA N6-adenosine threonylcarbamoyltransferase (Phytoplasma australiense).